The sequence spans 296 residues: Chelated iron transport system membrane protein YfeB (296 aa).

Residues 11 to 246 (LVVDNVTVTY…NLEMTFGGVL (236 aa)) enclose the ABC transporter domain. Residue 44 to 51 (GVNGSGKS) coordinates ATP. The interval 276–296 (VFYGHTKNDPPAQSQSKEQNS) is disordered. A compositionally biased stretch (polar residues) spans 286-296 (PAQSQSKEQNS).

The protein belongs to the ABC transporter superfamily.

It localises to the cell inner membrane. Its function is as follows. Part of an ATP-driven transport system YfeABCD for chelated iron. In Yersinia pestis, this protein is Chelated iron transport system membrane protein YfeB (yfeB).